Here is a 327-residue protein sequence, read N- to C-terminus: Pumilio homolog 18 (327 aa).

A PUM-HD domain is found at 1 to 324 (MAVADNPFSM…NIANILDSFR (324 aa)). Pumilio repeat units lie at residues 79 to 114 (SDSDYFMSIVTTKFGSRRVQKLLGKSDDVDAFFCAA), 115 to 149 (ILRRFLHITTDKYASYVTIRAMVVFDKVMKKALYE), 150 to 185 (RILYHALDLACDQHGCIALNDIITDADDPYYRDQLL), 186 to 222 (ELVASNALRLSNDASGNFVVQHVLTLYDSRCIHNIAV), 223 to 260 (NLYGQCIELSFKKYGSYIVEKLLEVEESMVVVVVELLG), and 261 to 295 (CDGDRLMRLARNEFGNFVVVKALRFTKMSRMDLFW).

The protein resides in the cytoplasm. Its function is as follows. Sequence-specific RNA-binding protein that regulates translation and mRNA stability by binding the 3'-UTR of target mRNAs. In Arabidopsis thaliana (Mouse-ear cress), this protein is Pumilio homolog 18 (APUM18).